A 311-amino-acid polypeptide reads, in one-letter code: MQEIQKNTKKEQYNLNKLQKRLRRNVGEAIADFNMIEEGDRIMVCLSGGKDSYTMLEILRNLQQSAPINFSLVAVNLDQKQPGFPEHILPAYLEQLGVEYKIVEENTYGIVKEKIPEGKTTCSLCSRLRRGILYRTATELGATKIALGHHRDDILQTLFLNMFYGGKMKGMPPKLMSDDGKHIVIRPLAYCREKDIVRFAEAKAFPIIPCNLCGSQPNLQRQVIADMLRDWDKRYPGRIETMFSAMQNVVPSHLCDTNLFDFKGITHGSEVVDGGDLAFDREEIPLQPAGWQPEEDDTALEALRLDVIEVK.

The short motif at 47-52 (SGGKDS) is the PP-loop motif element. The [4Fe-4S] cluster site is built by C122, C125, and C213.

It belongs to the TtcA family. Homodimer. It depends on Mg(2+) as a cofactor. The cofactor is [4Fe-4S] cluster.

The protein resides in the cytoplasm. The catalysed reaction is cytidine(32) in tRNA + S-sulfanyl-L-cysteinyl-[cysteine desulfurase] + AH2 + ATP = 2-thiocytidine(32) in tRNA + L-cysteinyl-[cysteine desulfurase] + A + AMP + diphosphate + H(+). It functions in the pathway tRNA modification. Its function is as follows. Catalyzes the ATP-dependent 2-thiolation of cytidine in position 32 of tRNA, to form 2-thiocytidine (s(2)C32). The sulfur atoms are provided by the cysteine/cysteine desulfurase (IscS) system. The sequence is that of tRNA-cytidine(32) 2-sulfurtransferase from Salmonella dublin (strain CT_02021853).